We begin with the raw amino-acid sequence, 165 residues long: Myosin regulatory light chain 2, ventricular/cardiac muscle isoform (165 aa).

Serine 2 bears the N,N,N-trimethylserine mark. Asparagine 14 carries the deamidated asparagine modification. Phosphoserine is present on residues serine 15 and serine 19. 3 consecutive EF-hand domains span residues 24-59 (TQIQ…LGRV), 94-129 (DPEE…QAER), and 130-165 (FSKD…GEEK). Residues aspartate 37, asparagine 39, aspartate 41, and aspartate 48 each contribute to the Ca(2+) site. Residue threonine 52 is modified to Phosphothreonine.

In terms of assembly, myosin is a hexamer of 2 heavy chains and 4 light chains. Interacts with MYOC. N-terminus is methylated by METTL11A/NTM1. Post-translationally, phosphorylated by MYLK3 and MYLK2; promotes cardiac muscle contraction and function. Dephosphorylated by PPP1CB complexed to PPP1R12B. The phosphorylated form in adult is expressed as gradients across the heart from endocardium (low phosphorylation) to epicardium (high phosphorylation); regulates cardiac torsion and workload distribution.

Its subcellular location is the cytoplasm. The protein resides in the myofibril. It localises to the sarcomere. The protein localises to the a band. Functionally, contractile protein that plays a role in heart development and function. Following phosphorylation, plays a role in cross-bridge cycling kinetics and cardiac muscle contraction by increasing myosin lever arm stiffness and promoting myosin head diffusion; as a consequence of the increase in maximum contraction force and calcium sensitivity of contraction force. These events altogether slow down myosin kinetics and prolong duty cycle resulting in accumulated myosins being cooperatively recruited to actin binding sites to sustain thin filament activation as a means to fine-tune myofilament calcium sensitivity to force. During cardiogenesis plays an early role in cardiac contractility by promoting cardiac myofibril assembly. This is Myosin regulatory light chain 2, ventricular/cardiac muscle isoform from Oryctolagus cuniculus (Rabbit).